Reading from the N-terminus, the 131-residue chain is Small ribosomal subunit protein uS10m (131 aa).

The protein belongs to the universal ribosomal protein uS10 family.

The protein localises to the mitochondrion. The polypeptide is Small ribosomal subunit protein uS10m (mrps10) (Dictyostelium discoideum (Social amoeba)).